The chain runs to 501 residues: Atypical kinase COQ8, mitochondrial (501 aa).

Residues 1–29 constitute a mitochondrion transit peptide; the sequence is MVTNMVKLRNLRRLYCSSRLLRTIQNGRI. The tract at residues 41–69 is disordered; that stretch reads YTTKSAKEGEENVERKHEEEKKDTLKSSS. The span at 45–65 shows a compositional bias: basic and acidic residues; that stretch reads SAKEGEENVERKHEEEKKDTL. The KxGQ motif signature appears at 134-137; it reads KIGQ. A Protein kinase domain is found at 188-501; the sequence is KFDKIPMAAA…LFKEIFAYKV (314 aa). An AAAS motif motif is present at residues 195 to 198; it reads AAAS. ATP-binding positions include serine 198, lysine 216, and 303–306; that span reads MTRM. Aspartate 346 functions as the Proton acceptor in the catalytic mechanism. ATP contacts are provided by asparagine 351 and aspartate 365.

Belongs to the protein kinase superfamily. ADCK protein kinase family. In terms of assembly, forms homopolymers. Predominantly associated with a complex of about 500 kDa.

Its subcellular location is the mitochondrion inner membrane. It functions in the pathway cofactor biosynthesis; ubiquinone biosynthesis. In terms of biological role, atypical kinase involved in the biosynthesis of coenzyme Q, also named ubiquinone, an essential lipid-soluble electron transporter for aerobic cellular respiration. Its substrate specificity is still unclear: may act as a protein kinase that mediates phosphorylation of COQ3, COQ5 and/or COQ7. According to other reports, acts as a small molecule kinase, possibly a lipid kinase that phosphorylates a prenyl lipid in the ubiquinone biosynthesis pathway, as suggested by its ability to bind coenzyme Q lipid intermediates. This is Atypical kinase COQ8, mitochondrial (COQ8) from Saccharomyces cerevisiae (strain ATCC 204508 / S288c) (Baker's yeast).